A 517-amino-acid polypeptide reads, in one-letter code: MDIIGGQHLRQMWDDLADVYGHKTALICESSGGVVNRYSYLELNQEINRTANLFYTLGIRKGDKVALHLDNCPEFIFCWFGLAKIGAIMVPINARLLREESAWILQNSQACLLVTSAQFYPMYQQIQQEDATQLRHICLTDVALPADDGVSSFTQLKNQQPATLCYAPPLSTDDTAEILFTSGTTSRPKGVVITHYNLRFAGYYSAWQCALRDDDVYLTVMPAFHIDCQCTAAMAAFSAGATFVLVEKYSARAFWGQVQKYRATITECIPMMIRTLMVQPPSANDRQHRLREVMFYLNLSEQEKDAFCERFGVRLLTSYGMTETIVGIIGDRPGDKRRWPSIGRAGFCYEAEIRDDHNRPLPAGEIGEICIKGVPGKTIFKEYFLNPKATAKVLEADGWLHTGDTGYCDEEGFFYFVDRRCNMIKRGGENVSCVELENIIATHPKIQDIVVVGIKDSIRDEAIKAFVVLNEGETLSEEEFFRFCEQNMAKFKVPSYLEIRKDLPRNCSGKIIRKNLK.

It belongs to the ATP-dependent AMP-binding enzyme family.

It catalyses the reaction 4-(trimethylamino)butanoate + ATP + CoA = 4-(trimethylamino)butanoyl-CoA + AMP + diphosphate. The catalysed reaction is crotonobetaine + ATP + CoA = crotonobetainyl-CoA + AMP + diphosphate. It carries out the reaction (R)-carnitine + ATP + CoA = (R)-carnitinyl-CoA + AMP + diphosphate. It participates in amine and polyamine metabolism; carnitine metabolism. Its function is as follows. Catalyzes the transfer of CoA to carnitine, generating the initial carnitinyl-CoA needed for the CaiB reaction cycle. Also has activity toward crotonobetaine and gamma-butyrobetaine. In Escherichia coli O9:H4 (strain HS), this protein is Crotonobetaine/carnitine--CoA ligase.